The chain runs to 179 residues: Large ribosomal subunit protein uL5 (179 aa).

Belongs to the universal ribosomal protein uL5 family. As to quaternary structure, part of the 50S ribosomal subunit; part of the 5S rRNA/L5/L18/L25 subcomplex. Contacts the 5S rRNA and the P site tRNA. Forms a bridge to the 30S subunit in the 70S ribosome.

Its function is as follows. This is one of the proteins that bind and probably mediate the attachment of the 5S RNA into the large ribosomal subunit, where it forms part of the central protuberance. In the 70S ribosome it contacts protein S13 of the 30S subunit (bridge B1b), connecting the 2 subunits; this bridge is implicated in subunit movement. Contacts the P site tRNA; the 5S rRNA and some of its associated proteins might help stabilize positioning of ribosome-bound tRNAs. This Staphylococcus carnosus (strain TM300) protein is Large ribosomal subunit protein uL5.